The chain runs to 227 residues: Ribosomal RNA large subunit methyltransferase E (227 aa).

Gly78, Trp80, Asp103, Asp119, and Asp143 together coordinate S-adenosyl-L-methionine. Lys183 (proton acceptor) is an active-site residue.

It belongs to the class I-like SAM-binding methyltransferase superfamily. RNA methyltransferase RlmE family.

It is found in the cytoplasm. It catalyses the reaction uridine(2552) in 23S rRNA + S-adenosyl-L-methionine = 2'-O-methyluridine(2552) in 23S rRNA + S-adenosyl-L-homocysteine + H(+). Functionally, specifically methylates the uridine in position 2552 of 23S rRNA at the 2'-O position of the ribose in the fully assembled 50S ribosomal subunit. The polypeptide is Ribosomal RNA large subunit methyltransferase E (Rickettsia rickettsii (strain Iowa)).